Reading from the N-terminus, the 492-residue chain is Catalase-1 (492 aa).

Catalysis depends on residues histidine 65 and asparagine 138. Tyrosine 348 serves as a coordination point for heme.

The protein belongs to the catalase family. In terms of assembly, homotetramer. The cofactor is heme.

It is found in the peroxisome. The protein resides in the glyoxysome. The catalysed reaction is 2 H2O2 = O2 + 2 H2O. Functionally, occurs in almost all aerobically respiring organisms and serves to protect cells from the toxic effects of hydrogen peroxide. This is Catalase-1 (CAT1) from Triticum aestivum (Wheat).